The sequence spans 457 residues: ATP synthase subunit beta (457 aa).

147–154 lines the ATP pocket; that stretch reads GGAGVGKT.

The protein belongs to the ATPase alpha/beta chains family. In terms of assembly, F-type ATPases have 2 components, CF(1) - the catalytic core - and CF(0) - the membrane proton channel. CF(1) has five subunits: alpha(3), beta(3), gamma(1), delta(1), epsilon(1). CF(0) has three main subunits: a(1), b(2) and c(9-12). The alpha and beta chains form an alternating ring which encloses part of the gamma chain. CF(1) is attached to CF(0) by a central stalk formed by the gamma and epsilon chains, while a peripheral stalk is formed by the delta and b chains.

It localises to the cell inner membrane. It carries out the reaction ATP + H2O + 4 H(+)(in) = ADP + phosphate + 5 H(+)(out). Produces ATP from ADP in the presence of a proton gradient across the membrane. The catalytic sites are hosted primarily by the beta subunits. This chain is ATP synthase subunit beta, found in Histophilus somni (strain 129Pt) (Haemophilus somnus).